We begin with the raw amino-acid sequence, 317 residues long: Nuclear distribution protein nudE homolog (317 aa).

Residues 29–180 (TDVKQEYDEF…LKQELNVKSR (152 aa)) adopt a coiled-coil conformation. The segment at 186–205 (NGTSVPTANDTNTVNSSMNS) is disordered.

This sequence belongs to the nudE family.

The protein localises to the cytoplasm. The protein resides in the cytoskeleton. Its subcellular location is the microtubule organizing center. It localises to the centrosome. It is found in the spindle. Its function is as follows. Chaperone protein with functions in nuclear localization. Required for centrosome duplication and formation and function of the mitotic spindle. In postmitotic neurons, acts with nudC downstream of dar1 to ensure correct positioning of the nuclei in primary dendrites and as a consequence, is required for determining multipolar neuron morphology. The protein is Nuclear distribution protein nudE homolog of Drosophila melanogaster (Fruit fly).